Here is a 228-residue protein sequence, read N- to C-terminus: Ribosomal RNA small subunit methyltransferase G (228 aa).

Residues Gly92, Phe97, 115–117 (EAT), 143–144 (AE), and Arg156 each bind S-adenosyl-L-methionine.

This sequence belongs to the methyltransferase superfamily. RNA methyltransferase RsmG family.

The protein resides in the cytoplasm. In terms of biological role, specifically methylates the N7 position of a guanine in 16S rRNA. This Thermosynechococcus vestitus (strain NIES-2133 / IAM M-273 / BP-1) protein is Ribosomal RNA small subunit methyltransferase G.